Consider the following 258-residue polypeptide: Alcohol dehydrogenase 2 (258 aa).

Position 9 to 33 (9 to 33 (IFVGGLGFIGYEACKQLMAKNMASF)) interacts with NAD(+). A substrate-binding site is contributed by Ser-137. Residue Tyr-150 is the Proton acceptor of the active site.

This sequence belongs to the short-chain dehydrogenases/reductases (SDR) family. As to quaternary structure, homodimer.

The enzyme catalyses a primary alcohol + NAD(+) = an aldehyde + NADH + H(+). It catalyses the reaction a secondary alcohol + NAD(+) = a ketone + NADH + H(+). The chain is Alcohol dehydrogenase 2 (ADH2) from Ceratitis rosa (Natal fruit fly).